The sequence spans 707 residues: Casein kinase 1-like protein HD16 (707 aa).

The tract at residues 19–67 is disordered; the sequence is YDVQDADPAASPVSPAPRGRTGRRGGAAAGRGNKTVAEGGGRKALKPRG. The span at 24–37 shows a compositional bias: low complexity; it reads ADPAASPVSPAPRG. The 279-residue stretch at 147–425 folds into the Protein kinase domain; that stretch reads YITDRKLGKG…KLISLFDGLI (279 aa). Residues 153–161 and lysine 184 each bind ATP; that span reads LGKGGFGQV. The Proton acceptor role is filled by aspartate 276.

Belongs to the protein kinase superfamily. CK1 Ser/Thr protein kinase family. Casein kinase I subfamily. Monomer. Interacts with GHD7 (via C-terminus). Interacts with SLR1. Post-translationally, autophosphorylated. As to expression, expressed in roots, leaves and stems. Expressed in leaf vascular bundles, and proximal regions of the shoot and roots.

Its subcellular location is the cytoplasm. It localises to the nucleus. It carries out the reaction L-seryl-[protein] + ATP = O-phospho-L-seryl-[protein] + ADP + H(+). The catalysed reaction is L-threonyl-[protein] + ATP = O-phospho-L-threonyl-[protein] + ADP + H(+). In terms of biological role, casein kinases are operationally defined by their preferential utilization of acidic proteins such as caseins as substrates. It can phosphorylate a large number of proteins. Can phosphorylate casein on threonine residues in vitro. Involved in the regulation of flowering time through gibberellin (GA) signaling, and independently of photoperiod. Phosphorylates the DELLA protein SLR1, stabilizing SLR1 protein and sustaining SLR1 activity as repressor of GA signaling. Required for normal development of male floral organs and grains, through modulation of GA signaling. Targeted and repressed by the homeobox protein HAZ1 during GA signaling. Can phosphorylate phosvitin and SLR1 in vitro. Is not required for clock function in either the presence or the absence of light signals. Involved in a genetic control pathway for photoperiodic flowering under long day (LD) conditions that includes HD1, GHD7, HD5 and HD2. Phosphorylates and activates GHD7, a major floral repressor under LD conditions. Phosphorylation of GHD7 enhances its function in the repression of EHD1, HD3A and HD3B/RFT1, and obviously delaying flowering. The polypeptide is Casein kinase 1-like protein HD16 (Oryza sativa subsp. japonica (Rice)).